Here is a 572-residue protein sequence, read N- to C-terminus: 3-ketosteroid oxygenase (572 aa).

The next 2 helical transmembrane spans lie at 52-72 (AFAL…RNFL) and 84-104 (YFMR…FIRI).

Belongs to the cytochrome P450 family. Expressed in the 2 embryonic head hypodermal cells XXXL/R.

It localises to the membrane. It carries out the reaction 5alpha-cholest-7-en-3-one + 3 reduced [NADPH--hemoprotein reductase] + 3 O2 = (25S)-Delta7-dafachronate + 3 oxidized [NADPH--hemoprotein reductase] + 4 H2O + 4 H(+). The catalysed reaction is cholest-4-en-3-one + 3 reduced [NADPH--hemoprotein reductase] + 3 O2 = (25S)-3-oxocholest-4-en-26-oate + 3 oxidized [NADPH--hemoprotein reductase] + 4 H2O + 4 H(+). It participates in steroid hormone biosynthesis; dafachronic acid biosynthesis. Converts the 3-keto steroids 4-cholesten-3-one and lathosterone into the carboxylic metabolites 3-keto-4-cholestenate (Delta(4)-dafachronic acid, Delta(4)-DA) and 3-keto-7,(5a)-cholestenate (Delta(7)-dafachronic acid, Delta(7)-DA) respectively, by catalyzing successive oxidations at C-26. Dafachronic acids bind directly to the nuclear hormone receptor (NHR) DAF-12, suppressing dauer formation and inducing reproductive growth. In a non-cell autonomous manner, negatively regulates body wall muscle arm extensions to motor neurons probably by preventing daf-12 isoform b activation. May be involved in thermotolerance. The polypeptide is 3-ketosteroid oxygenase (daf-9) (Caenorhabditis elegans).